Reading from the N-terminus, the 178-residue chain is Ribosome maturation factor RimM (178 aa).

In terms of domain architecture, PRC barrel spans 100-173 (ADEYFIHQLY…QIVVRLLPGL (74 aa)).

This sequence belongs to the RimM family. In terms of assembly, binds ribosomal protein uS19.

Its subcellular location is the cytoplasm. An accessory protein needed during the final step in the assembly of 30S ribosomal subunit, possibly for assembly of the head region. Essential for efficient processing of 16S rRNA. May be needed both before and after RbfA during the maturation of 16S rRNA. It has affinity for free ribosomal 30S subunits but not for 70S ribosomes. This is Ribosome maturation factor RimM from Roseiflexus castenholzii (strain DSM 13941 / HLO8).